The chain runs to 882 residues: Leucine--tRNA ligase (882 aa).

Positions 43-53 (PYPSGNLHMGH) match the 'HIGH' region motif. A 'KMSKS' region motif is present at residues 632–636 (TMSKS). Residue K635 coordinates ATP.

The protein belongs to the class-I aminoacyl-tRNA synthetase family.

It is found in the cytoplasm. The catalysed reaction is tRNA(Leu) + L-leucine + ATP = L-leucyl-tRNA(Leu) + AMP + diphosphate. In Synechococcus sp. (strain JA-2-3B'a(2-13)) (Cyanobacteria bacterium Yellowstone B-Prime), this protein is Leucine--tRNA ligase.